A 215-amino-acid chain; its full sequence is N-(5'-phosphoribosyl)anthranilate isomerase (215 aa).

Belongs to the TrpF family.

It catalyses the reaction N-(5-phospho-beta-D-ribosyl)anthranilate = 1-(2-carboxyphenylamino)-1-deoxy-D-ribulose 5-phosphate. The protein operates within amino-acid biosynthesis; L-tryptophan biosynthesis; L-tryptophan from chorismate: step 3/5. The sequence is that of N-(5'-phosphoribosyl)anthranilate isomerase from Parvibaculum lavamentivorans (strain DS-1 / DSM 13023 / NCIMB 13966).